We begin with the raw amino-acid sequence, 637 residues long: 1-deoxy-D-xylulose-5-phosphate synthase (637 aa).

Residues His72 and Gly113–Ala115 contribute to the thiamine diphosphate site. Mg(2+) is bound at residue Asp144. Residues Gly145 to Ala146, Asn174, Tyr287, and Glu370 contribute to the thiamine diphosphate site. Residue Asn174 participates in Mg(2+) binding.

Belongs to the transketolase family. DXPS subfamily. In terms of assembly, homodimer. It depends on Mg(2+) as a cofactor. Thiamine diphosphate serves as cofactor.

The catalysed reaction is D-glyceraldehyde 3-phosphate + pyruvate + H(+) = 1-deoxy-D-xylulose 5-phosphate + CO2. The protein operates within metabolic intermediate biosynthesis; 1-deoxy-D-xylulose 5-phosphate biosynthesis; 1-deoxy-D-xylulose 5-phosphate from D-glyceraldehyde 3-phosphate and pyruvate: step 1/1. Its function is as follows. Catalyzes the acyloin condensation reaction between C atoms 2 and 3 of pyruvate and glyceraldehyde 3-phosphate to yield 1-deoxy-D-xylulose-5-phosphate (DXP). This Prochlorococcus marinus subsp. pastoris (strain CCMP1986 / NIES-2087 / MED4) protein is 1-deoxy-D-xylulose-5-phosphate synthase.